The following is a 567-amino-acid chain: Lipase maturation factor 1 (567 aa).

The segment at 1–39 (MRPDSPTMAAPAESLRRRKTGYSDPEPESPPAPGRGPAG) is disordered. The Cytoplasmic portion of the chain corresponds to 1 to 49 (MRPDSPTMAAPAESLRRRKTGYSDPEPESPPAPGRGPAGSPAHLHTGTF). Residues 50-72 (WLTRIVLLKALAFVYFVAFLVAF) traverse the membrane as a helical segment. Over 73-127 (HQNKQLIGDRGLLPCRVFLKNFQQYFQDRTSWEVFSYMPTILWLMDWSDMNSNLD) the chain is Lumenal. Residues 128-151 (LLALLGLGISSFVLITGCANMLLM) form a helical membrane-spanning segment. The Cytoplasmic portion of the chain corresponds to 152–207 (AALWGLYMSLVNVGHVWYSFGWESQLLETGFLGIFLCPLWTLSRLPQHTPTSRIVL). The helical transmembrane segment at 208-221 (WGFRWLIFRIMLGA) threads the bilayer. Over 222-292 (GLIKIRGDRC…LGRRACIIHG (71 aa)) the chain is Lumenal. A helical transmembrane segment spans residues 293-321 (VLQILFQAVLIVSGNLSFLNWLTMVPSLA). Over 322–367 (CFDDATLGFLFPSGPGSLKDRVLQMQRDIRGARPEPRFGSVVRRAA) the chain is Cytoplasmic. Residues 368-388 (NVSLGVLLAWLSVPVVLNLLS) traverse the membrane as a helical segment. Over 389–567 (SRQVMNTHFN…DRGWPLPGPL (179 aa)) the chain is Lumenal.

The protein belongs to the lipase maturation factor family. As to quaternary structure, interacts with LPL and SEL1L.

Its subcellular location is the endoplasmic reticulum membrane. Functionally, involved in the maturation of specific proteins in the endoplasmic reticulum. Required for maturation and transport of active lipoprotein lipase (LPL) through the secretory pathway. Each LMF1 molecule chaperones 50 or more molecules of LPL. The sequence is that of Lipase maturation factor 1 (LMF1) from Homo sapiens (Human).